Reading from the N-terminus, the 437-residue chain is UDP-N-acetylmuramate--L-alanine ligase (437 aa).

108-114 is an ATP binding site; sequence GAHGKTS.

The protein belongs to the MurCDEF family.

Its subcellular location is the cytoplasm. It catalyses the reaction UDP-N-acetyl-alpha-D-muramate + L-alanine + ATP = UDP-N-acetyl-alpha-D-muramoyl-L-alanine + ADP + phosphate + H(+). It functions in the pathway cell wall biogenesis; peptidoglycan biosynthesis. Cell wall formation. This is UDP-N-acetylmuramate--L-alanine ligase from Staphylococcus epidermidis (strain ATCC 12228 / FDA PCI 1200).